Reading from the N-terminus, the 222-residue chain is Phosphoenolpyruvate guanylyltransferase (222 aa).

T147, G163, and S166 together coordinate phosphoenolpyruvate.

The protein belongs to the CofC family.

It catalyses the reaction phosphoenolpyruvate + GTP + H(+) = enolpyruvoyl-2-diphospho-5'-guanosine + diphosphate. The protein operates within cofactor biosynthesis; coenzyme F420 biosynthesis. Guanylyltransferase that catalyzes the activation of phosphoenolpyruvate (PEP) as enolpyruvoyl-2-diphospho-5'-guanosine, via the condensation of PEP with GTP. It is involved in the biosynthesis of coenzyme F420, a hydride carrier cofactor. The polypeptide is Phosphoenolpyruvate guanylyltransferase (Streptosporangium roseum (strain ATCC 12428 / DSM 43021 / JCM 3005 / KCTC 9067 / NCIMB 10171 / NRRL 2505 / NI 9100)).